The sequence spans 299 residues: Taste receptor type 2 member 4 (299 aa).

Over 1–9 (MLRLFYFSA) the chain is Extracellular. A helical transmembrane segment spans residues 10–30 (IIASVILNFVGIIMNLFITVV). The Cytoplasmic portion of the chain corresponds to 31-46 (NCKTWVKSHRISSSDR). A helical transmembrane segment spans residues 47 to 67 (ILFSLGITRFLMLGLFLVNTI). The Extracellular portion of the chain corresponds to 68–81 (YFVSSNXERSVYLS). A helical membrane pass occupies residues 82–102 (AFFVLCFMFLDSSSLWFVTLL). Topologically, residues 103–131 (NILYCVKITNFQHSVFLLLKRNISPKIPR) are cytoplasmic. A helical membrane pass occupies residues 132–152 (LLLACVLISAFTTCLYITLSQ). Over 153-172 (ASPFPELVTTRNNTSFNINE) the chain is Extracellular. Asn164 and Asn165 each carry an N-linked (GlcNAc...) asparagine glycan. The helical transmembrane segment at 173-193 (GILSLVVSLVLSSSLQFIINV) threads the bilayer. Residues 194 to 230 (TSASLLIHSLRRHIQKMQKNATGFWNPQTEAHVGAMK) are Cytoplasmic-facing. A helical transmembrane segment spans residues 231–251 (LMVYFLILYIPYSVATLVQYL). The Extracellular segment spans residues 252–262 (PFYAGMDMGTK). Residues 263–283 (SICLIFATLYSPGHSVLIIIT) traverse the membrane as a helical segment. Residues 284-299 (HPKLKTTAKKILCFKK) are Cytoplasmic-facing.

Belongs to the G-protein coupled receptor T2R family.

Its subcellular location is the membrane. The protein resides in the cell projection. The protein localises to the cilium membrane. Functionally, gustducin-coupled receptor implicated in the perception of bitter compounds in the oral cavity and the gastrointestinal tract. Signals through PLCB2 and the calcium-regulated cation channel TRPM5. In airway epithelial cells, binding of denatonium increases the intracellular calcium ion concentration and stimulates ciliary beat frequency. This Pan troglodytes (Chimpanzee) protein is Taste receptor type 2 member 4 (TAS2R4).